We begin with the raw amino-acid sequence, 429 residues long: Proton/sodium-glutamate symport protein (429 aa).

Residues 1–5 (MKRIK) lie on the Cytoplasmic side of the membrane. Residues 6-26 (FGLATQIFVGLILGVIVGVIW) traverse the membrane as a helical segment. The Extracellular segment spans residues 27 to 45 (YGNPALPTYLQPIGDLFLR). The helical transmembrane segment at 46-66 (LIKMIVIPIVVSSLIIGVAGA) threads the bilayer. Residues 67–79 (GNGKQVGKLGFRT) lie on the Cytoplasmic side of the membrane. Residues 80–100 (ILYFEIITTFAIILGLALANI) traverse the membrane as a helical segment. Topologically, residues 101–150 (FHPGTGVNIHEAQKSDISQYVETEKEQSNKSVAETFLHIVPTNFFQSLVE) are extracellular. Residues 151-171 (GDLLAIICFTVLFALGISAIG) form a helical membrane-spanning segment. Topologically, residues 172 to 190 (ERGKPVLAFFEGVSHAMFH) are cytoplasmic. The helical transmembrane segment at 191–211 (VVNLVMKVAPFGVFALIGVTV) threads the bilayer. The Extracellular portion of the chain corresponds to 212–224 (SKFGLGSLISLGK). A helical transmembrane segment spans residues 225-245 (LVGLVYVALAFFLIVIFGIVA). Residue K246 is a topological domain, cytoplasmic. The helical transmembrane segment at 247–267 (IAGISIFKFLAYMKDEILLAF) threads the bilayer. Topologically, residues 268–290 (STSSSETVLPRIMEKMEKIGCPK) are extracellular. A helical membrane pass occupies residues 291–311 (GIVSFVIPIGYTFNLDGSVLY). Over 312-321 (QSIAALFLAQ) the chain is Cytoplasmic. Residues 322-342 (VYGIDLTIWHQITLVLVLMVT) form a helical membrane-spanning segment. At 343–353 (SKGMAAVPGTS) the chain is on the extracellular side. The helical transmembrane segment at 354–374 (FVVLLATLGTIGVPAEGLAFI) threads the bilayer. Over 375 to 429 (AGVDRIMDMARTVVNLTGNALAAVVMSKWEGMFNPAKAETVMSQSKTEQNATISG) the chain is Cytoplasmic.

This sequence belongs to the dicarboxylate/amino acid:cation symporter (DAACS) (TC 2.A.23) family. Homotrimer. Interacts with FloT.

Its subcellular location is the cell membrane. It is found in the membrane raft. Its function is as follows. This carrier protein is part of the Na(+)-dependent, binding-protein-independent glutamate-aspartate transport system. The polypeptide is Proton/sodium-glutamate symport protein (gltT) (Bacillus subtilis (strain 168)).